The chain runs to 356 residues: D-alanine--D-alanine ligase (356 aa).

An ATP-grasp domain is found at 134 to 339 (KQLFAHRGLP…YSDLIKKLIE (206 aa)). 167–222 (HDKLEYPVFVKPANLGSSVGISKCNNEEELKNGIEEAFQFDRKLVIEQGIEAREIE) provides a ligand contact to ATP. Mg(2+)-binding residues include D293, E306, and N308.

This sequence belongs to the D-alanine--D-alanine ligase family. Mg(2+) is required as a cofactor. Requires Mn(2+) as cofactor.

Its subcellular location is the cytoplasm. The enzyme catalyses 2 D-alanine + ATP = D-alanyl-D-alanine + ADP + phosphate + H(+). The protein operates within cell wall biogenesis; peptidoglycan biosynthesis. Its function is as follows. Cell wall formation. The chain is D-alanine--D-alanine ligase from Staphylococcus saprophyticus subsp. saprophyticus (strain ATCC 15305 / DSM 20229 / NCIMB 8711 / NCTC 7292 / S-41).